Here is a 51-residue protein sequence, read N- to C-terminus: UPF0320 protein YOL166W-A (51 aa).

It belongs to the UPF0320 family.

The polypeptide is UPF0320 protein YOL166W-A (Saccharomyces cerevisiae (strain ATCC 204508 / S288c) (Baker's yeast)).